Here is a 139-residue protein sequence, read N- to C-terminus: Peptide methionine sulfoxide reductase MsrB (139 aa).

The MsrB domain occupies 8–130 (DQEWRQQLTD…NSASLRFHSA (123 aa)). Zn(2+)-binding residues include cysteine 47, cysteine 50, cysteine 96, and cysteine 99. The active-site Nucleophile is cysteine 119.

The protein belongs to the MsrB Met sulfoxide reductase family. The cofactor is Zn(2+).

The catalysed reaction is L-methionyl-[protein] + [thioredoxin]-disulfide + H2O = L-methionyl-(R)-S-oxide-[protein] + [thioredoxin]-dithiol. The chain is Peptide methionine sulfoxide reductase MsrB from Hahella chejuensis (strain KCTC 2396).